The chain runs to 215 residues: Adenylate kinase (215 aa).

Residue 10–15 (GAGKGT) participates in ATP binding. The interval 30 to 59 (STGDMLRAAVKAGSPLGQQVKGVMDSGGLV) is NMP. AMP-binding positions include Thr-31, Arg-36, 57 to 59 (GLV), 85 to 88 (GFPR), and Gln-92. Positions 122–159 (GRRVHPASGRVYHTEHNPPKVAGKDDVTGEDLIQREDD) are LID. ATP is bound by residues Arg-123 and 132-133 (VY). AMP-binding residues include Arg-156 and Arg-167. Position 201 (Gly-201) interacts with ATP.

This sequence belongs to the adenylate kinase family. Monomer.

Its subcellular location is the cytoplasm. It catalyses the reaction AMP + ATP = 2 ADP. The protein operates within purine metabolism; AMP biosynthesis via salvage pathway; AMP from ADP: step 1/1. Functionally, catalyzes the reversible transfer of the terminal phosphate group between ATP and AMP. Plays an important role in cellular energy homeostasis and in adenine nucleotide metabolism. This Pseudomonas paraeruginosa (strain DSM 24068 / PA7) (Pseudomonas aeruginosa (strain PA7)) protein is Adenylate kinase.